An 880-amino-acid chain; its full sequence is MDNQELTMPTKYDPSAVEKDRYDYWVNGKFFEAKNDPEKEPYTVVIPPPNVTGKLHLGHAWDSTLQDIVTRMKRMQGYDVLWLPGMDHAGIATQAKVEAKLREEGKTRYDLGREKFLEETWNWKEEYADFIRSQWAKLGLGLDYSRERFTLDEGLSKAVREVFVKLYEKGLIYRGEYIINWDPATKTALSDIEVIYKDVQGAFYHMRYPLKDGSGSIEIATTRPETMLGDTAVAVHPEDERYKHLIGKTVILPITGREIPIVGDDYVDMEFGSGAVKITPAHDPNDFEIGNRHNLERILVMNEDGTMNDNALQYKGMDRFECRKQIVKDLQEEGVLFKIEEHTHSVGHSERSGAVVEPYLSTQWFVQMQPLADAAIELQKSEGKVNFVPDRFEKTYLHWMENIRDWCISRQLWWGHRIPAWYHKETGEIYVGVEAPEDAENWEQDKDVLDTWFSSALWPFSTMGWPDIDEEDFKRYYPTNVLVTGYDIIFFWVSRMIFQGIEFTGERPFKDVLIHGLIRDDQGRKMSKSLGNGVDPMDVIDKYGADSLRYFLATGSSPGQDLRFSFEKVESTWNFANKIWNASRFALMNMDGMTYEELDLSGEKSVADKWILTRLNETIETVTQLADKYEFGEVGRHLYNFIWDDFCDWYIEMAKLPLYGEDEAAKKTTRSILAYVLDQTMRLLHPFMPFLTEEIWQHLPHEGESITVAKWPEAVKEYTDTEAAADMKLLVEVIRAVRNIRSEVNTPLSKQIELYIKTSTPEIAERLEENRSYVERFTNPSLLQIGTDIQAVDKAMTAVVSGAELILPLEGLINIDEEISRLQKELDKLTKEVERVQKKLSNEGFMKKAPAHVIEEERAKEADYTAKREAVEKRIAELKN.

Positions 49-59 match the 'HIGH' region motif; that stretch reads PNVTGKLHLGH. Residues 525–529 carry the 'KMSKS' region motif; it reads KMSKS. Position 528 (Lys-528) interacts with ATP. A coiled-coil region spans residues 809 to 880; the sequence is LEGLINIDEE…VEKRIAELKN (72 aa).

This sequence belongs to the class-I aminoacyl-tRNA synthetase family. ValS type 1 subfamily. In terms of assembly, monomer.

Its subcellular location is the cytoplasm. It catalyses the reaction tRNA(Val) + L-valine + ATP = L-valyl-tRNA(Val) + AMP + diphosphate. Catalyzes the attachment of valine to tRNA(Val). As ValRS can inadvertently accommodate and process structurally similar amino acids such as threonine, to avoid such errors, it has a 'posttransfer' editing activity that hydrolyzes mischarged Thr-tRNA(Val) in a tRNA-dependent manner. This is Valine--tRNA ligase from Bacillus licheniformis (strain ATCC 14580 / DSM 13 / JCM 2505 / CCUG 7422 / NBRC 12200 / NCIMB 9375 / NCTC 10341 / NRRL NRS-1264 / Gibson 46).